The following is a 348-amino-acid chain: Hereditary hemochromatosis protein homolog (348 aa).

An N-terminal signal peptide occupies residues 1 to 22 (MGPRARPALFFLILLRTVAAQG). The segment at 23–114 (RPPRSHSLRY…IMDNHNHSKE (92 aa)) is alpha-1. The Extracellular portion of the chain corresponds to 23–306 (RPPRSHSLRY…WEPSLSNTLV (284 aa)). Asn110, Asn130, and Asn234 each carry an N-linked (GlcNAc...) asparagine glycan. An alpha-2 region spans residues 115–205 (SHTLQVILGC…ELGRGVLDQQ (91 aa)). 2 disulfides stabilise this stretch: Cys124-Cys187 and Cys225-Cys282. The interval 206 to 297 (VPPLVKVTHH…GLDQPLTATW (92 aa)) is alpha-3. Residues 207–296 (PPLVKVTHHV…PGLDQPLTAT (90 aa)) enclose the Ig-like C1-type domain. Residues 298–306 (EPSLSNTLV) form a connecting peptide region. The helical transmembrane segment at 307–330 (TGVISGIAVCVIIFLIGILFRILR) threads the bilayer. Residues 331–348 (KRQASRGAMGDYVLAECE) are Cytoplasmic-facing.

The protein belongs to the MHC class I family. In terms of assembly, binds TFR through the extracellular domain in a pH-dependent manner.

Its subcellular location is the cell membrane. Functionally, binds to transferrin receptor (TFR) and reduces its affinity for iron-loaded transferrin. The polypeptide is Hereditary hemochromatosis protein homolog (HFE) (Dicerorhinus sumatrensis (Sumatran rhinoceros)).